Reading from the N-terminus, the 783-residue chain is Serine/threonine-protein kinase SIK1 (783 aa).

A Protein kinase domain is found at 27–278; it reads YDIERTLGKG…IAQIRQHRWM (252 aa). ATP contacts are provided by residues 33–41 and Lys56; that span reads LGKGNFAVV. The Proton acceptor role is filled by Asp149. Thr182 carries the post-translational modification Phosphothreonine; by LKB1 and GSK3-beta. Phosphoserine; by autocatalysis is present on Ser186. The UBA domain maps to 303–343; that stretch reads DYDEQALGIMQTLGVDRQRTVESLQNSSYNHFAAIYYLLLE. Thr322 bears the Phosphothreonine; by CaMK1 mark. Disordered regions lie at residues 353–377 and 449–477; these read CARP…VPQE and RQGP…LAEV. Thr473 is subject to Phosphothreonine; by PKA. Position 575 is a phosphoserine; by PKA (Ser575). The segment at 583–612 is RK-rich region; required for cAMP responsiveness and nuclear localization; the sequence is LKAFRQQLRKTTRTKGFLGLNKIKGLARQV. Positions 619 to 643 are disordered; the sequence is RASRGGLSPFHAPAQSPGLHGGAAG.

Belongs to the protein kinase superfamily. CAMK Ser/Thr protein kinase family. AMPK subfamily. In terms of assembly, interacts with ATP1A1. Interacts (when phosphorylated on Thr-182 and Ser-186) with YWHAZ. Interacts (when phosphorylated at Thr-473 and/or Ser-575) with 14-3-3 proteins; the interaction inhibits kinase activity towards TORCs. There is a cooperative effect of the phosphorylation sites in 14-3-3 binding as the interaction is stronger when both Thr-473 and Ser-575 are modified. It depends on Mg(2+) as a cofactor. Post-translationally, phosphorylated at Thr-182 by STK11/LKB1 in complex with STE20-related adapter-alpha (STRADA) pseudo kinase and CAB39, leading to its activation. Phosphorylation at Thr-182 promotes autophosphorylation at Ser-186, which is required for sustained activity. Autophosphorylation at Ser-186 is maintained by sequential phosphorylation at Thr-182 by GSK3-beta. GSK3-beta cannot initiate phosphorylation at Thr-182, it can only maintain it. Phosphorylation at Ser-575 in response to cAMP signaling promotes translocation to the cytoplasm. Phosphorylation at Thr-322 by CaMK1 following intracellular sodium concentration leads to activation.

It is found in the cytoplasm. The protein resides in the nucleus. It carries out the reaction L-seryl-[protein] + ATP = O-phospho-L-seryl-[protein] + ADP + H(+). The catalysed reaction is L-threonyl-[protein] + ATP = O-phospho-L-threonyl-[protein] + ADP + H(+). With respect to regulation, activated by phosphorylation on Thr-182. Also activated by phosphorylation on Thr-322 in response to increases in intracellular sodium in parallel with elevations in intracellular calcium through the reversible sodium/calcium exchanger. Inhibited by phosphorylation at Thr-473 and Ser-575, probably by PKA, which triggers interaction with 14-3-3 proteins. Its function is as follows. Serine/threonine-protein kinase involved in various processes such as cell cycle regulation, gluconeogenesis and lipogenesis regulation, muscle growth and differentiation and tumor suppression. Phosphorylates HDAC4, HDAC5, PPME1, SREBF1, CRTC1/TORC1. Inhibits CREB activity by phosphorylating and inhibiting activity of TORCs, the CREB-specific coactivators, like CRTC2/TORC2 and CRTC3/TORC3 in response to cAMP signaling. Acts as a tumor suppressor and plays a key role in p53/TP53-dependent anoikis, a type of apoptosis triggered by cell detachment: required for phosphorylation of p53/TP53 in response to loss of adhesion and is able to suppress metastasis. Part of a sodium-sensing signaling network, probably by mediating phosphorylation of PPME1: following increases in intracellular sodium, SIK1 is activated by CaMK1 and phosphorylates PPME1 subunit of protein phosphatase 2A (PP2A), leading to dephosphorylation of sodium/potassium-transporting ATPase ATP1A1 and subsequent increase activity of ATP1A1. Acts as a regulator of muscle cells by phosphorylating and inhibiting class II histone deacetylases HDAC4 and HDAC5, leading to promote expression of MEF2 target genes in myocytes. Also required during cardiomyogenesis by regulating the exit of cardiomyoblasts from the cell cycle via down-regulation of CDKN1C/p57Kip2. Acts as a regulator of hepatic gluconeogenesis by phosphorylating and repressing the CREB-specific coactivators CRTC1/TORC1 and CRTC2/TORC2, leading to inhibit CREB activity. Also regulates hepatic lipogenesis by phosphorylating and inhibiting SREBF1. In concert with CRTC1/TORC1, regulates the light-induced entrainment of the circadian clock by attenuating PER1 induction; represses CREB-mediated transcription of PER1 by phosphorylating and deactivating CRTC1/TORC1. This is Serine/threonine-protein kinase SIK1 (SIK1) from Homo sapiens (Human).